We begin with the raw amino-acid sequence, 96 residues long: Sec-independent protein translocase protein TatA (96 aa).

The chain crosses the membrane as a helical span at residues 1–21 (MGFSSIWHWIIVLVVVLLLFG). A disordered region spans residues 42 to 96 (GMADDEDDEAASVSAERRGIEDGKPAQTIYPPQQPQQPQQPPQQPPVHRDDAPRG). Basic and acidic residues predominate over residues 56–65 (AERRGIEDGK). Positions 73 to 86 (PQQPQQPQQPPQQP) are enriched in pro residues.

Belongs to the TatA/E family. As to quaternary structure, the Tat system comprises two distinct complexes: a TatABC complex, containing multiple copies of TatA, TatB and TatC subunits, and a separate TatA complex, containing only TatA subunits. Substrates initially bind to the TatABC complex, which probably triggers association of the separate TatA complex to form the active translocon.

It is found in the cell inner membrane. Part of the twin-arginine translocation (Tat) system that transports large folded proteins containing a characteristic twin-arginine motif in their signal peptide across membranes. TatA could form the protein-conducting channel of the Tat system. The protein is Sec-independent protein translocase protein TatA of Rhodospirillum rubrum (strain ATCC 11170 / ATH 1.1.1 / DSM 467 / LMG 4362 / NCIMB 8255 / S1).